Reading from the N-terminus, the 351-residue chain is Calcium uniporter protein, mitochondrial (351 aa).

Residues 1-50 (MAAAAGRSLLLLLSSRGGGGGGAGGCGALTAGCFPGLGVSRHRQQQHHRT) constitute a mitochondrion transit peptide. The Mitochondrial matrix portion of the chain corresponds to 51–233 (VHQRIASWQN…ISRKAEKRTT (183 aa)). Phosphoserine; by CaMK2 occurs at positions 57 and 92. Residues 75–165 (VTVVYQNGLP…LTYHVRPPKR (91 aa)) form an N-terminal MCU domain region. Residue cysteine 97 is modified to S-glutathionyl cysteine. A coiled-coil region spans residues 192-223 (IEQHQLNKERELIERLEDLKEQLAPLEKVRIE). The helical transmembrane segment at 234–255 (LVLWGGLAYMATQFGILARLTW) threads the bilayer. Residues 256 to 262 (WEYSWDI) are Mitochondrial intermembrane-facing. The short motif at 260-268 (WDIMEPVTY) is the Selectivity filter element. A helical membrane pass occupies residues 263 to 284 (MEPVTYFITYGSAMAMYAYFVM). Glutamate 264 lines the Ca(2+) pocket. Residues 285-290 (TRQEYV) form a juxtamembrane helix region. The Mitochondrial matrix segment spans residues 285–351 (TRQEYVYPEA…LPLRQIGEKD (67 aa)). Residues 311–339 (RFDLEKYNQLKDAIAQAEMDLKRLRDPLQ) adopt a coiled-coil conformation. Lysine 332 bears the N6-acetyllysine mark.

It belongs to the MCU (TC 1.A.77) family. In terms of assembly, homotetramer. Component of the uniplex complex, composed of MCU, EMRE/SMDT1, MICU1 and MICU2 (or MICU3) in a 4:4:1:1 stoichiometry. Interacts with CCDC109B/MCUB; this inhibits channel activity. Interacts with MCUR1. Interactions with MICU1 and MCUR1 are mutually exclusive. Interacts with SLC25A23. In terms of processing, phosphorylation by CaMK2 in heart leads to increased MCU current. The regulation of MCU by CaMK2 is however subject to discussion: another group was unable to reproduce these results. Phosphorylated on tyrosines by PTK2B/PYK2, promoting oligomerization. Glutathionylation at Cys-97 in response to reactive oxygen species (ROS) promotes MCU higher-order assembly, leading to constitutive activation of the MCU channel and mitochondrial calcium overload. Post-translationally, undergoes proteolytic degradation by SPG7.

The protein localises to the mitochondrion inner membrane. The catalysed reaction is Ca(2+)(in) = Ca(2+)(out). Its activity is regulated as follows. MCU channel activity is regulated by the heterodimer composed of MICU1 and either MICU2 or MICU3, which act as calcium-sensors. At low calcium levels, MICU1 occludes the pore of the MCU channel, preventing mitochondrial calcium uptake. At higher calcium levels, calcium-binding to MICU1 and MICU2 (or MICU3) induces a conformational change that weakens MCU-MICU1 interactions and moves the MICU1-MICU2 heterodimer away from the pore, allowing calcium permeation through the channel. MCU channel activity is gated by EMRE/SMDT1 via the juxtamembrane helix loop. Inhibited by ruthenium red or its derivative Ru360. Channel-forming and calcium-conducting subunit of the mitochondrial inner membrane calcium uniporter complex (uniplex), which mediates calcium uptake into the mitochondrial matrix. MCU channel activity is regulated by the calcium-sensor subunits of the uniplex MICU1 and MICU2 (or MICU3). Mitochondrial calcium homeostasis plays key roles in cellular physiology and regulates ATP production, cytoplasmic calcium signals and activation of cell death pathways. Involved in buffering the amplitude of systolic calcium rises in cardiomyocytes. While dispensable for baseline homeostatic cardiac function, acts as a key regulator of short-term mitochondrial calcium loading underlying a 'fight-or-flight' response during acute stress: acts by mediating a rapid increase of mitochondrial calcium in pacemaker cells. Participates in mitochondrial permeability transition during ischemia-reperfusion injury. Mitochondrial calcium uptake in skeletal muscle cells is involved in muscle size in adults. Regulates synaptic vesicle endocytosis kinetics in central nerve terminal. Regulates glucose-dependent insulin secretion in pancreatic beta-cells by regulating mitochondrial calcium uptake. Involved in antigen processing and presentation. The polypeptide is Calcium uniporter protein, mitochondrial (Homo sapiens (Human)).